A 133-amino-acid polypeptide reads, in one-letter code: Ribosome-binding factor A (133 aa).

Belongs to the RbfA family. Monomer. Binds 30S ribosomal subunits, but not 50S ribosomal subunits or 70S ribosomes.

The protein resides in the cytoplasm. One of several proteins that assist in the late maturation steps of the functional core of the 30S ribosomal subunit. Associates with free 30S ribosomal subunits (but not with 30S subunits that are part of 70S ribosomes or polysomes). Required for efficient processing of 16S rRNA. May interact with the 5'-terminal helix region of 16S rRNA. The sequence is that of Ribosome-binding factor A from Bordetella bronchiseptica (strain ATCC BAA-588 / NCTC 13252 / RB50) (Alcaligenes bronchisepticus).